We begin with the raw amino-acid sequence, 350 residues long: Probable aldo-keto reductase 1 (350 aa).

Y67 acts as the Proton donor in catalysis. H135 is a binding site for substrate. 214–224 (SPLGKGFFSSG) serves as a coordination point for NADP(+).

This sequence belongs to the aldo/keto reductase family.

The polypeptide is Probable aldo-keto reductase 1 (Oryza sativa subsp. indica (Rice)).